The following is a 450-amino-acid chain: Nuclear hormone receptor family member nhr-40 (450 aa).

The nuclear receptor DNA-binding region spans 28–103; sequence GTLCVVCSDF…MGMDPKAIQH (76 aa). NR C4-type zinc fingers lie at residues 31-51 and 67-91; these read CVVCSDFASGIHYSVASCNGC and CQFSGDCVVGKSVRCVCRSCRLKKC. Residues 173 to 450 form the NR LBD domain; sequence DVKAVIEDLL…LIDQLIIVGL (278 aa).

This sequence belongs to the nuclear hormone receptor family. Isoform b: Expressed in body wall muscle cells, pharyngeal muscles, rectal gland cells, vulval and uterine muscles and neurons in the head and ventral nerve cord. Isoform c: Expressed in body wall muscle cells, neurons in the head, nerve ring, ventral and dorsal nerve cords and epidermal cells in the tail.

The protein resides in the nucleus. Functionally, orphan nuclear receptor. Plays a role in morphogenesis and elongation during embryonic and larval development. Plays a role in muscle formation and motility. This chain is Nuclear hormone receptor family member nhr-40, found in Caenorhabditis elegans.